Consider the following 200-residue polypeptide: MTNLDNNNLNEEIKNKLEKQQNQKEQKLIIVIMGVSGSGKTTIGNAIASSLGCGFNDADEFHSEENKEKMRSGIPLNDDDRKPWLSSINKRMIEFLNNENDGANDHVFTCSALKSTYRDQISNNINKDNLLFILLQGSKQLLSERLQNRKNHFFNPNLLDSQLSILELPTQSELSNHHYAFIDISNSVDEIVEEIFNYLK.

An ATP-binding site is contributed by 34–41 (GVSGSGKT).

It belongs to the gluconokinase GntK/GntV family.

It catalyses the reaction D-gluconate + ATP = 6-phospho-D-gluconate + ADP + H(+). It participates in carbohydrate acid metabolism; D-gluconate degradation. The protein is Probable gluconokinase of Dictyostelium discoideum (Social amoeba).